The sequence spans 226 residues: RNA-binding protein 24 (226 aa).

Residues 11-88 enclose the RRM domain; that stretch reads TKIFVGGLPY…RKANVNLAYL (78 aa).

Its subcellular location is the nucleus. It is found in the cytoplasm. In terms of biological role, multifunctional RNA-binding protein involved in the regulation of pre-mRNA splicing, mRNA stability and mRNA translation important for cell fate decision and differentiation. Plays a major role in pre-mRNA alternative splicing regulation. Mediates preferentially muscle-specific exon inclusion in numerous mRNAs important for striated cardiac and skeletal muscle cell differentiation. Binds to intronic splicing enhancer (ISE) composed of stretches of GU-rich motifs localized in flanking intron of exon that will be included by alternative splicing. Involved in embryonic stem cell (ESC) transition to cardiac cell differentiation by promoting pre-mRNA alternative splicing events of several pluripotency and/or differentiation genes. Plays a role in the regulation of mRNA stability and mRNA translation to which it is bound. Involved in myogenic differentiation by regulating myog levels. Binds to a huge amount of mRNAs. Required for embryonic heart development, sarcomer and M-band formation in striated muscles. This is RNA-binding protein 24 (rbm24) from Xenopus tropicalis (Western clawed frog).